The chain runs to 456 residues: Ribosomal RNA small subunit methyltransferase F (456 aa).

Residues 109–115 (AAAPGGK), glutamate 133, arginine 138, and aspartate 177 each bind S-adenosyl-L-methionine. The active-site Nucleophile is cysteine 230.

The protein belongs to the class I-like SAM-binding methyltransferase superfamily. RsmB/NOP family.

The protein localises to the cytoplasm. It catalyses the reaction cytidine(1400) in 16S rRNA + S-adenosyl-L-methionine = 5-methylcytidine(1400) in 16S rRNA + S-adenosyl-L-homocysteine + H(+). The enzyme catalyses cytidine(1404) in 16S rRNA + S-adenosyl-L-methionine = 5-methylcytidine(1404) in 16S rRNA + S-adenosyl-L-homocysteine + H(+). It carries out the reaction cytidine(1407) in 16S rRNA + S-adenosyl-L-methionine = 5-methylcytidine(1407) in 16S rRNA + S-adenosyl-L-homocysteine + H(+). Its function is as follows. Specifically methylates the cytosines at positions 1400 (m5C1400), 1404 (m5C1404) and 1407 (m5C1407) of 16S rRNA. C1400, C1404 and C1407 are methylated in a 30S subunit substrate, but only C1400 and C1404 are methylated when naked 16S rRNA is the substrate. Methylation by RsmF may facilitate growth at temperatures outside the optimal growth temperature. This Thermus thermophilus (strain ATCC 27634 / DSM 579 / HB8) protein is Ribosomal RNA small subunit methyltransferase F.